We begin with the raw amino-acid sequence, 120 residues long: Small ribosomal subunit protein eS24 (120 aa).

The interval 101 to 120 (RDAGTKQKKGGSKGGQGAKG) is disordered.

Belongs to the eukaryotic ribosomal protein eS24 family.

The chain is Small ribosomal subunit protein eS24 from Saccharolobus islandicus (strain M.16.4 / Kamchatka #3) (Sulfolobus islandicus).